The primary structure comprises 348 residues: Dihydroorotase (348 aa).

Zn(2+)-binding residues include His17 and His19. Residues 19 to 21 (HLR) and Asn45 contribute to the substrate site. Lys103, His140, and His178 together coordinate Zn(2+). Lys103 carries the post-translational modification N6-carboxylysine. Residue His140 coordinates substrate. A substrate-binding site is contributed by Leu223. Asp251 provides a ligand contact to Zn(2+). The active site involves Asp251. Substrate-binding residues include His255 and Ala267.

Belongs to the metallo-dependent hydrolases superfamily. DHOase family. Class II DHOase subfamily. Homodimer. The cofactor is Zn(2+).

The catalysed reaction is (S)-dihydroorotate + H2O = N-carbamoyl-L-aspartate + H(+). Its pathway is pyrimidine metabolism; UMP biosynthesis via de novo pathway; (S)-dihydroorotate from bicarbonate: step 3/3. Catalyzes the reversible cyclization of carbamoyl aspartate to dihydroorotate. The protein is Dihydroorotase of Escherichia coli O6:K15:H31 (strain 536 / UPEC).